Consider the following 134-residue polypeptide: Transcription antitermination protein NusB (134 aa).

It belongs to the NusB family.

Its function is as follows. Involved in transcription antitermination. Required for transcription of ribosomal RNA (rRNA) genes. Binds specifically to the boxA antiterminator sequence of the ribosomal RNA (rrn) operons. This is Transcription antitermination protein NusB from Shewanella frigidimarina (strain NCIMB 400).